Here is a 103-residue protein sequence, read N- to C-terminus: UPF0132 membrane protein AF_0105 (103 aa).

Helical transmembrane passes span 5–25, 35–55, and 58–78; these read VAGALSYLLGPITGILFLLME, AMQSTITFAGFWVLDIALSFI, and IGVLLIPIVGLVAFITWLVCI.

Belongs to the UPF0132 family.

The protein localises to the cell membrane. The sequence is that of UPF0132 membrane protein AF_0105 from Archaeoglobus fulgidus (strain ATCC 49558 / DSM 4304 / JCM 9628 / NBRC 100126 / VC-16).